Reading from the N-terminus, the 346-residue chain is Beta-ketoacyl-[acyl-carrier-protein] synthase III (346 aa).

Active-site residues include Cys-120 and His-256. Residues 257-261 (QANIR) are ACP-binding. The active site involves Asn-286.

This sequence belongs to the thiolase-like superfamily. FabH family. Homodimer.

The protein localises to the cytoplasm. It catalyses the reaction malonyl-[ACP] + acetyl-CoA + H(+) = 3-oxobutanoyl-[ACP] + CO2 + CoA. The protein operates within lipid metabolism; fatty acid biosynthesis. Catalyzes the condensation reaction of fatty acid synthesis by the addition to an acyl acceptor of two carbons from malonyl-ACP. Catalyzes the first condensation reaction which initiates fatty acid synthesis and may therefore play a role in governing the total rate of fatty acid production. Possesses both acetoacetyl-ACP synthase and acetyl transacylase activities. Its substrate specificity determines the biosynthesis of branched-chain and/or straight-chain of fatty acids. The sequence is that of Beta-ketoacyl-[acyl-carrier-protein] synthase III from Deinococcus geothermalis (strain DSM 11300 / CIP 105573 / AG-3a).